The sequence spans 300 residues: Putative hydrolase ML2424 (300 aa).

The Nucleophile role is filled by Asp-56. Mg(2+)-binding residues include Asp-56, Asp-58, and Asp-231. The active-site Proton donor is the Asp-58.

Belongs to the HAD-like hydrolase superfamily. SerB family. Requires Mg(2+) as cofactor.

The protein is Putative hydrolase ML2424 of Mycobacterium leprae (strain TN).